The chain runs to 409 residues: Methylthioribose-1-phosphate isomerase (409 aa).

D277 (proton donor) is an active-site residue.

Belongs to the eIF-2B alpha/beta/delta subunits family. MtnA subfamily.

Its subcellular location is the cytoplasm. It localises to the nucleus. It catalyses the reaction 5-(methylsulfanyl)-alpha-D-ribose 1-phosphate = 5-(methylsulfanyl)-D-ribulose 1-phosphate. The protein operates within amino-acid biosynthesis; L-methionine biosynthesis via salvage pathway; L-methionine from S-methyl-5-thio-alpha-D-ribose 1-phosphate: step 1/6. In terms of biological role, catalyzes the interconversion of methylthioribose-1-phosphate (MTR-1-P) into methylthioribulose-1-phosphate (MTRu-1-P). This Scheffersomyces stipitis (strain ATCC 58785 / CBS 6054 / NBRC 10063 / NRRL Y-11545) (Yeast) protein is Methylthioribose-1-phosphate isomerase.